Consider the following 118-residue polypeptide: Large ribosomal subunit protein bL19 (118 aa).

This sequence belongs to the bacterial ribosomal protein bL19 family.

Functionally, this protein is located at the 30S-50S ribosomal subunit interface and may play a role in the structure and function of the aminoacyl-tRNA binding site. This Dictyoglomus turgidum (strain DSM 6724 / Z-1310) protein is Large ribosomal subunit protein bL19.